The sequence spans 631 residues: Chaperone protein DnaK (631 aa).

Thr198 carries the phosphothreonine; by autocatalysis modification. Residues 602-631 (EAAGGAQQAGKDDVVDAEFTEVDDDKKKSA) form a disordered region.

Belongs to the heat shock protein 70 family.

Acts as a chaperone. The sequence is that of Chaperone protein DnaK from Rhodopseudomonas palustris (strain ATCC BAA-98 / CGA009).